The primary structure comprises 374 residues: Alanine racemase (374 aa).

The Proton acceptor; specific for D-alanine role is filled by Lys-34. Residue Lys-34 is modified to N6-(pyridoxal phosphate)lysine. A substrate-binding site is contributed by Arg-138. The Proton acceptor; specific for L-alanine role is filled by Tyr-265. Position 313 (Met-313) interacts with substrate.

The protein belongs to the alanine racemase family. Pyridoxal 5'-phosphate serves as cofactor.

The enzyme catalyses L-alanine = D-alanine. It participates in amino-acid biosynthesis; D-alanine biosynthesis; D-alanine from L-alanine: step 1/1. Catalyzes the interconversion of L-alanine and D-alanine. May also act on other amino acids. The polypeptide is Alanine racemase (alr) (Hahella chejuensis (strain KCTC 2396)).